Here is a 686-residue protein sequence, read N- to C-terminus: Delta-like protein 4 (686 aa).

The N-terminal stretch at Met-1–Gly-27 is a signal peptide. At Ser-28 to Trp-530 the chain is on the extracellular side. 2 cysteine pairs are disulfide-bonded: Cys-51/Cys-55 and Cys-62/Cys-75. Residues Asn-79, Asn-109, and Asn-162 are each glycosylated (N-linked (GlcNAc...) asparagine). In terms of domain architecture, DSL spans Val-174–Cys-218. Residues Cys-176 and Cys-185 are joined by a disulfide bond. Interaction with Notch1 stretches follow at residues Ser-186 to Leu-188 and Arg-192 to Phe-196. 26 disulfide bridges follow: Cys-189–Cys-201, Cys-209–Cys-218, Cys-223–Cys-234, Cys-227–Cys-240, Cys-242–Cys-251, Cys-254–Cys-265, Cys-260–Cys-271, Cys-273–Cys-282, Cys-289–Cys-301, Cys-295–Cys-311, Cys-313–Cys-322, Cys-329–Cys-340, Cys-334–Cys-349, Cys-351–Cys-360, Cys-367–Cys-378, Cys-372–Cys-389, Cys-391–Cys-400, Cys-407–Cys-418, Cys-412–Cys-427, Cys-429–Cys-438, Cys-445–Cys-456, Cys-450–Cys-465, Cys-467–Cys-476, Cys-485–Cys-496, Cys-490–Cys-507, and Cys-509–Cys-518. 8 EGF-like domains span residues Asp-219–Asn-252, Pro-256–Asp-283, Asp-285–Glu-323, Glu-325–Glu-361, Ser-363–Glu-401, Lys-403–Glu-439, His-441–Glu-477, and Thr-481–Glu-519. Residues Val-531 to Val-551 form a helical membrane-spanning segment. Topologically, residues Ala-552 to Val-686 are cytoplasmic.

As to quaternary structure, interacts with NOTCH4. Interacts (via N-terminal DSL and MNNL domains) with NOTCH1 (via EGF-like domains).

The protein localises to the cell membrane. Its function is as follows. Involved in the Notch signaling pathway as Notch ligand. Activates NOTCH1 and NOTCH4. Involved in angiogenesis; negatively regulates endothelial cell proliferation and migration and angiogenic sprouting. Essential for retinal progenitor proliferation. Required for suppressing rod fates in late retinal progenitors as well as for proper generation of other retinal cell types. During spinal cord neurogenesis, inhibits V2a interneuron fate. In Rattus norvegicus (Rat), this protein is Delta-like protein 4.